We begin with the raw amino-acid sequence, 398 residues long: Chalcone synthase 1 (398 aa).

Residue cysteine 167 is part of the active site.

Belongs to the thiolase-like superfamily. Chalcone/stilbene synthases family.

It carries out the reaction (E)-4-coumaroyl-CoA + 3 malonyl-CoA + 3 H(+) = 2',4,4',6'-tetrahydroxychalcone + 3 CO2 + 4 CoA. It participates in secondary metabolite biosynthesis; flavonoid biosynthesis. The primary product of this enzyme is 4,2',4',6'-tetrahydroxychalcone (also termed naringenin-chalcone or chalcone) which can under specific conditions spontaneously isomerize into naringenin. This is Chalcone synthase 1 (CHS1) from Gerbera hybrida (Daisy).